Reading from the N-terminus, the 344-residue chain is L-rhamnose-proton symporter (344 aa).

10 consecutive transmembrane segments (helical) span residues 4-24 (AITM…CFYA), 38-58 (WSVG…ALLL), 68-88 (FSLS…IGNI), 101-121 (MGIG…TPII), 137-157 (TLLG…AGQL), 175-195 (LVLA…MNAA), 214-234 (LPSY…FCFI), 259-279 (VLLS…YAWG), 290-310 (ISWM…GLVL), and 323-343 (VLSL…IGMA).

The protein belongs to the L-rhamnose transporter (TC 2.A.7.6) family.

The protein localises to the cell inner membrane. It catalyses the reaction L-rhamnopyranose(in) + H(+)(in) = L-rhamnopyranose(out) + H(+)(out). Uptake of L-rhamnose across the cytoplasmic membrane with the concomitant transport of protons into the cell (symport system). In Escherichia coli O127:H6 (strain E2348/69 / EPEC), this protein is L-rhamnose-proton symporter.